Consider the following 127-residue polypeptide: Aspartate 1-decarboxylase (127 aa).

The Schiff-base intermediate with substrate; via pyruvic acid role is filled by serine 25. Serine 25 is subject to Pyruvic acid (Ser). Position 57 (threonine 57) interacts with substrate. Catalysis depends on tyrosine 58, which acts as the Proton donor. Glycine 73–alanine 75 lines the substrate pocket.

It belongs to the PanD family. As to quaternary structure, heterooctamer of four alpha and four beta subunits. The cofactor is pyruvate. Is synthesized initially as an inactive proenzyme, which is activated by self-cleavage at a specific serine bond to produce a beta-subunit with a hydroxyl group at its C-terminus and an alpha-subunit with a pyruvoyl group at its N-terminus.

Its subcellular location is the cytoplasm. The catalysed reaction is L-aspartate + H(+) = beta-alanine + CO2. It participates in cofactor biosynthesis; (R)-pantothenate biosynthesis; beta-alanine from L-aspartate: step 1/1. Its function is as follows. Catalyzes the pyruvoyl-dependent decarboxylation of aspartate to produce beta-alanine. In Clostridium acetobutylicum (strain ATCC 824 / DSM 792 / JCM 1419 / IAM 19013 / LMG 5710 / NBRC 13948 / NRRL B-527 / VKM B-1787 / 2291 / W), this protein is Aspartate 1-decarboxylase.